The sequence spans 509 residues: Cytochrome P450 4X1 (509 aa).

The chain crosses the membrane as a helical span at residues F14 to L34. A heme-binding site is contributed by C454.

The protein belongs to the cytochrome P450 family. The cofactor is heme. Expressed in brain, heart, kidney and skin and, at lower levels, in skeletal muscle and liver. In the brain, high levels are detected in amygdala and lower levels in globus pallidus and cerebellum. In the heart, very high levels in aorta, but very low levels in other heart regions. Also expressed in breast, prostate and colon.

The protein resides in the endoplasmic reticulum membrane. It is found in the microsome membrane. It catalyses the reaction N-(5Z,8Z,11Z,14Z-eicosatetraenoyl)-ethanolamine + reduced [NADPH--hemoprotein reductase] + O2 = N-(14,15-epoxy-5Z,8Z,11Z-eicosatrienoyl)-ethanolamine + oxidized [NADPH--hemoprotein reductase] + H2O + H(+). In terms of biological role, a cytochrome P450 monooxygenase that selectively catalyzes the epoxidation of the last double bond of the arachidonoyl moiety of anandamide, potentially modulating endocannabinoid signaling. Has no hydroxylase activity toward various fatty acids, steroids and prostaglandins. Mechanistically, uses molecular oxygen inserting one oxygen atom into a substrate, and reducing the second into a water molecule, with two electrons provided by NADPH via cytochrome P450 reductase (CPR; NADPH-ferrihemoprotein reductase). The protein is Cytochrome P450 4X1 of Homo sapiens (Human).